The primary structure comprises 270 residues: Glutamate 5-kinase (270 aa).

Lysine 17 is an ATP binding site. 3 residues coordinate substrate: serine 57, aspartate 144, and asparagine 160. ATP is bound by residues 180–181 and 222–228; these read SD and TGGMTSK.

The protein belongs to the glutamate 5-kinase family.

It is found in the cytoplasm. It catalyses the reaction L-glutamate + ATP = L-glutamyl 5-phosphate + ADP. Its pathway is amino-acid biosynthesis; L-proline biosynthesis; L-glutamate 5-semialdehyde from L-glutamate: step 1/2. Functionally, catalyzes the transfer of a phosphate group to glutamate to form L-glutamate 5-phosphate. In Lactococcus lactis subsp. cremoris (strain SK11), this protein is Glutamate 5-kinase.